A 127-amino-acid chain; its full sequence is Large ribosomal subunit protein uL18 (127 aa).

This sequence belongs to the universal ribosomal protein uL18 family. As to quaternary structure, part of the 50S ribosomal subunit; part of the 5S rRNA/L5/L18/L25 subcomplex. Contacts the 5S and 23S rRNAs.

This is one of the proteins that bind and probably mediate the attachment of the 5S RNA into the large ribosomal subunit, where it forms part of the central protuberance. The sequence is that of Large ribosomal subunit protein uL18 from Streptomyces coelicolor (strain ATCC BAA-471 / A3(2) / M145).